The primary structure comprises 226 residues: MTLLILLRHGQSVWNQKNLFTGWVDIPLSQQGIQEAIAAGESIKHLPIDCIFTSTLVRSLITALLAMTNHSSQKVPYIVHEERPDMSRIHSQKEMEQMIPLFQSSALNERMYGELQGKNKQEVAAQFGEEQVKLWRRSYRIAPPQGESLFDTGQRTLPYFQERIFPLLQQGKNIFISAHGNSLRSLIMDLEKLSEEQVLSLELPTGQPIVYEWTGQKFTKHAPSLG.

Residues 8 to 15 (RHGQSVWN), 21 to 22 (TG), Arg-58, 109 to 112 (ERMY), Lys-120, 136 to 137 (RR), and 180 to 181 (GN) each bind substrate. His-9 acts as the Tele-phosphohistidine intermediate in catalysis. Glu-109 serves as the catalytic Proton donor/acceptor.

This sequence belongs to the phosphoglycerate mutase family. BPG-dependent PGAM subfamily.

The enzyme catalyses (2R)-2-phosphoglycerate = (2R)-3-phosphoglycerate. It participates in carbohydrate degradation; glycolysis; pyruvate from D-glyceraldehyde 3-phosphate: step 3/5. Functionally, catalyzes the interconversion of 2-phosphoglycerate and 3-phosphoglycerate. This is 2,3-bisphosphoglycerate-dependent phosphoglycerate mutase from Chlamydia trachomatis serovar A (strain ATCC VR-571B / DSM 19440 / HAR-13).